Reading from the N-terminus, the 1011-residue chain is Collagen alpha-2(I) chain (1011 aa).

A disordered region spans residues 1 to 1011 (SGGFDFSFLP…FGYEGDFYRA (1011 aa)). 4-hydroxyproline occurs at positions 10, 13, 35, and 41. A compositionally biased stretch (low complexity) spans 28-67 (LMGPRGPPGASGAPGPQGFQGPAGEPGEPGQTGPAGARGP). Position 106 is a 5-hydroxylysine; alternate (Lys-106). Lys-106 is a glycosylation site (O-linked (Gal...) hydroxylysine; alternate). The span at 167 to 182 (SVGPVGPAGPIGSAGP) shows a compositional bias: low complexity. Residues 282–291 (GESGGKGEPG) show a composition bias toward gly residues. Over residues 292–302 (SAGPQGPPGSS) the composition is skewed to low complexity. The span at 323–332 (GLRGGPGSRG) shows a compositional bias: gly residues. Low complexity predominate over residues 345 to 361 (PAGARGASGPAGVRGPS). 2 positions are modified to 4-hydroxyproline: Pro-367 and Pro-370. Low complexity predominate over residues 396 to 415 (LPGIDGRPGPIGPAGARGEA). Positions 464–473 (GVQGGKGEQG) are enriched in gly residues. Low complexity-rich tracts occupy residues 520–537 (PGESGAVGPSGAIGSRGP) and 549–559 (EPGVVGAPGTA). Positions 560–578 (GPAGSGGPGERGAAGIPGG) are enriched in gly residues. 2 stretches are compositionally biased toward low complexity: residues 588-635 (RGEV…PRGS) and 642-662 (VGPAGPNGFAGPAGAAGQPGA). The segment covering 663–672 (KGERGTKGPK) has biased composition (basic and acidic residues). Residues 680-690 (PTGPVGSAGPA) are compositionally biased toward low complexity. Residues 700–709 (GSRGDGGPPG) are compositionally biased toward gly residues. Residues 711 to 720 (TGFPGAAGRT) show a composition bias toward low complexity. The segment covering 757–766 (GETGAGGPPG) has biased composition (gly residues). 2 stretches are compositionally biased toward low complexity: residues 774 to 801 (SGEPGTAGPPGTAGPQGLLGAPGILGLP) and 809 to 819 (LPGVAGAVGEP). Over residues 820-834 (GPLGIGPPGARGDGL) the composition is skewed to gly residues. Composition is skewed to low complexity over residues 843–856 (YAGNAGPVGAAGAP) and 872–887 (EPGPVGSVGPVGALGP). Residues 897 to 908 (RGDKGEPGEKGP) show a composition bias toward basic and acidic residues. Over residues 981-993 (SGPPGPPGPPGPP) the composition is skewed to pro residues.

It belongs to the fibrillar collagen family. In terms of assembly, trimers of one alpha 2(I) and two alpha 1(I) chains. Interacts (via C-terminus) with TMEM131 (via PapD-L domain); the interaction is direct and is involved in assembly and TRAPPIII ER-to-Golgi transport complex-dependent secretion of collagen. In terms of processing, prolines at the third position of the tripeptide repeating unit (G-X-Y) are hydroxylated in some or all of the chains. In terms of tissue distribution, expressed in bones.

It localises to the secreted. The protein localises to the extracellular space. The protein resides in the extracellular matrix. In terms of biological role, type I collagen is a member of group I collagen (fibrillar forming collagen). The polypeptide is Collagen alpha-2(I) chain (Neocnus comes (Miller's Hispaniolan ground sloth)).